The sequence spans 237 residues: Undecaprenyl-diphosphatase (237 aa).

Helical transmembrane passes span 38–58 (QTAVLHLGTLVSVVLFAFDGI), 65–85 (WRIILNLIVSTIPAGVFGVLF), 92–112 (LFSSPRFLPLFFSVTALILMF), 126–146 (MSFLDALLVGIAQLFALFPGI), 166–186 (ALQYSFLMSIPVVLGAGILGL), 191–211 (ITILAPIFAFLSGLFALYVLS), and 217–237 (GKIWQFSYYCLFVAILSYLVG).

It belongs to the UppP family.

It localises to the cell inner membrane. The catalysed reaction is di-trans,octa-cis-undecaprenyl diphosphate + H2O = di-trans,octa-cis-undecaprenyl phosphate + phosphate + H(+). In terms of biological role, catalyzes the dephosphorylation of undecaprenyl diphosphate (UPP). Confers resistance to bacitracin. The sequence is that of Undecaprenyl-diphosphatase from Thermotoga petrophila (strain ATCC BAA-488 / DSM 13995 / JCM 10881 / RKU-1).